Consider the following 283-residue polypeptide: Thymidylate synthase (283 aa).

Arginine 22 is a dUMP binding site. Catalysis depends on cysteine 160, which acts as the Nucleophile. Residues 180–183, asparagine 191, and 221–223 contribute to the dUMP site; these read RSCD and HIY. Aspartate 183 serves as a coordination point for (6R)-5,10-methylene-5,6,7,8-tetrahydrofolate. (6R)-5,10-methylene-5,6,7,8-tetrahydrofolate is bound at residue serine 282.

The protein belongs to the thymidylate synthase family. Bacterial-type ThyA subfamily. Homodimer.

It is found in the cytoplasm. It carries out the reaction dUMP + (6R)-5,10-methylene-5,6,7,8-tetrahydrofolate = 7,8-dihydrofolate + dTMP. It participates in pyrimidine metabolism; dTTP biosynthesis. Functionally, catalyzes the reductive methylation of 2'-deoxyuridine-5'-monophosphate (dUMP) to 2'-deoxythymidine-5'-monophosphate (dTMP) while utilizing 5,10-methylenetetrahydrofolate (mTHF) as the methyl donor and reductant in the reaction, yielding dihydrofolate (DHF) as a by-product. This enzymatic reaction provides an intracellular de novo source of dTMP, an essential precursor for DNA biosynthesis. The sequence is that of Thymidylate synthase from Vibrio vulnificus (strain CMCP6).